We begin with the raw amino-acid sequence, 257 residues long: Protein YIPF5 (257 aa).

Topologically, residues 1 to 124 (MSGFDNLNSG…RAADGSIMNE (124 aa)) are cytoplasmic. Positions 75–106 (PTTPQPFYGDSFEEEPPLLEELGINFDHIWQK) are interaction with Sec23. Residues 125–145 (TDLAGPVVFCLAFGATLLLAG) form a helical membrane-spanning segment. Residue lysine 146 is a topological domain, lumenal. A helical membrane pass occupies residues 147-167 (IQFGYVYGISAIGCLGMFCLL). The Cytoplasmic segment spans residues 168-173 (NLMSMT). Residues 174 to 194 (GVSFGCVASVLGYCLLPMILL) form a helical membrane-spanning segment. Residues 195 to 196 (SS) lie on the Lumenal side of the membrane. A helical membrane pass occupies residues 197 to 217 (FAVVFSLQGMVGILLTATIIG). At 218–236 (WCSFSASKIFISALAMDGQ) the chain is on the cytoplasmic side. A helical transmembrane segment spans residues 237 to 257 (QLLVAYPCALLYGVFALISVF).

The protein belongs to the YIP1 family. As to quaternary structure, interacts with the COPII coat components Sec23 (SEC23A and/or SEC23B) and Sec24 (SEC24A and/or SEC24B). Interacts with YIF1A. May interact with RAB1A. Interacts with YIPF3 and YIPF4. As to expression, ubiquitously expressed.

It localises to the golgi apparatus. The protein resides in the cis-Golgi network membrane. Its subcellular location is the cytoplasmic vesicle. The protein localises to the COPII-coated vesicle. It is found in the endoplasmic reticulum membrane. Functionally, plays a role in transport between endoplasmic reticulum and Golgi. In pancreatic beta cells, required to transport proinsulin from endoplasmic reticulum into the Golgi. This Mus musculus (Mouse) protein is Protein YIPF5.